Consider the following 587-residue polypeptide: MKSSAAKQTVLCLNRYAVVALPLAIASFAAFGASPASTLWAPTDTKAFVTPAQVEARSAAPLLELAAGETAHIVVSLKLRDEAQLKQLAQAVNQPGNAQFGKFLKRRQFLSQFAPTEAQVQAVVAHLRKNGFVNIHVVPNRLLISADGSAGAVKAAFNTPLVRYQLNGKAGYANTAPAQVPQDLGEIVGSVLGLQNVTRAHPMLKVGERSAAKTLAAGTAKGHNPTEFPTIYDASSAPTAANTTVGIITIGGVSQTLQDLQQFTSANGLASVNTQTIQTGSSNGDYSDDQQGQGEWDLDSQSIVGSAGGAVQQLLFYMADQSASGNTGLTQAFNQAVSDNVAKVINVSLGWCEADANADGTLQAEDRIFATAAAQGQTFSVSSGDEGVYECNNRGYPDGSTYSVSWPASSPNVIAVGGTTLYTTSAGAYSNETVWNEGLDSNGKLWATGGGYSVYESKPSWQSVVSGTPGRRLLPDISFDAAQGTGALIYNYGQLQQIGGTSLASPIFVGLWARLQSANSNSLGFPAASFYSAISSTPSLVHDVKSGNNGYGGYGYNAGTGWDYPTGWGSLDIAKLSAYIRSNGFGH.

A signal peptide spans 1–32 (MKSSAAKQTVLCLNRYAVVALPLAIASFAAFG). Positions 33-215 (ASPASTLWAP…VGERSAAKTL (183 aa)) are cleaved as a propeptide — removed in mature form. One can recognise a Peptidase S53 domain in the interval 219–583 (TAKGHNPTEF…AKLSAYIRSN (365 aa)). Residues 276-295 (TIQTGSSNGDYSDDQQGQGE) are disordered. Active-site charge relay system residues include E295 and D299. A disulfide bond links C352 and C391. The active-site Charge relay system is S502. Ca(2+) contacts are provided by D543, V544, G559, G561, and D563. Residues 586–587 (GH) constitute a propeptide, removed in mature form.

Ca(2+) serves as cofactor. In terms of processing, autocatalytically processed.

The protein resides in the periplasm. The enzyme catalyses Hydrolysis of the B chain of insulin at 13-Glu-|-Ala-14, 15-Leu-|-Tyr-16 and 25-Phe-|-Tyr-26 and angiotensin I at 4-Tyr-|-Ile-5. A good synthetic substrate is Lys-Pro-Ile-Glu-Phe-|-Phe(NO2)-Arg-Leu.. Its activity is regulated as follows. Inhibited by 1,2-epoxy-3-(p-nitrophenoxy)propane (EPNP), but not by carboxyl proteinase inhibitors, such as pepstatin, pepstatin Ac (S-PI) and diazoacetyl-DL-norleucine methyl ester (DAN). Inhibited by tyrostatin, pseudo-tyrostatin, AcIPF, AcIAF, chymostatin and pseudo-iodotyrostatin. Pepstatin-insensitive serine-carboxyl proteinase. In vitro can hydrolyze various synthetic peptides. Also shows activity on acid-denatured hemoglobin and on casein. The protein is Sedolisin (pcp) of Pseudomonas sp. (strain 101) (Achromobacter parvulus T1).